A 219-amino-acid chain; its full sequence is Epididymal secretory glutathione peroxidase (219 aa).

The first 21 residues, 1–21, serve as a signal peptide directing secretion; it reads MTVQLGAFYLFPLFMAGFVQT. Residue C71 is part of the active site.

It belongs to the glutathione peroxidase family. Homotetramer. Proximal caput epididymis.

The protein localises to the secreted. The catalysed reaction is 2 glutathione + H2O2 = glutathione disulfide + 2 H2O. In terms of biological role, may constitute a glutathione peroxidase-like protective system against peroxide damage in sperm membrane lipids. Since the purified porcine enzyme has very little activity towards hydrogen peroxide or organic hydroperoxides the protective effect is not likely to be exerted by its enzymatic activity. Instead, may protect sperm from premature acrosome reaction in the epididymis by binding to lipid peroxides, which might otherwise interact with phospholipase A2 and induce the acrosome reaction. The chain is Epididymal secretory glutathione peroxidase (GPX5) from Sus scrofa (Pig).